Consider the following 173-residue polypeptide: Protein GrpE (173 aa).

This sequence belongs to the GrpE family. In terms of assembly, homodimer.

The protein localises to the cytoplasm. Its function is as follows. Participates actively in the response to hyperosmotic and heat shock by preventing the aggregation of stress-denatured proteins, in association with DnaK and GrpE. It is the nucleotide exchange factor for DnaK and may function as a thermosensor. Unfolded proteins bind initially to DnaJ; upon interaction with the DnaJ-bound protein, DnaK hydrolyzes its bound ATP, resulting in the formation of a stable complex. GrpE releases ADP from DnaK; ATP binding to DnaK triggers the release of the substrate protein, thus completing the reaction cycle. Several rounds of ATP-dependent interactions between DnaJ, DnaK and GrpE are required for fully efficient folding. The polypeptide is Protein GrpE (Campylobacter fetus subsp. fetus (strain 82-40)).